The chain runs to 174 residues: MTRILGIDPGSQRTGIGIIDIDEGGRSRHVHHAPLMLLGEGDFSQRLKRLLQGLGELIEIYRPDEVAIEKVFMGKSAASALKLGHARGAAICAVVMRDLPVHEYAAKEIKLALVGKGGADKVQVQHMVGIMLNLNGKLQPDAADALAVAITHAHVRATAQRLGVNTQQAWSRKK.

Catalysis depends on residues Asp-8, Glu-69, and Asp-141. Mg(2+)-binding residues include Asp-8, Glu-69, and Asp-141.

It belongs to the RuvC family. As to quaternary structure, homodimer which binds Holliday junction (HJ) DNA. The HJ becomes 2-fold symmetrical on binding to RuvC with unstacked arms; it has a different conformation from HJ DNA in complex with RuvA. In the full resolvosome a probable DNA-RuvA(4)-RuvB(12)-RuvC(2) complex forms which resolves the HJ. It depends on Mg(2+) as a cofactor.

It localises to the cytoplasm. It carries out the reaction Endonucleolytic cleavage at a junction such as a reciprocal single-stranded crossover between two homologous DNA duplexes (Holliday junction).. Its function is as follows. The RuvA-RuvB-RuvC complex processes Holliday junction (HJ) DNA during genetic recombination and DNA repair. Endonuclease that resolves HJ intermediates. Cleaves cruciform DNA by making single-stranded nicks across the HJ at symmetrical positions within the homologous arms, yielding a 5'-phosphate and a 3'-hydroxyl group; requires a central core of homology in the junction. The consensus cleavage sequence is 5'-(A/T)TT(C/G)-3'. Cleavage occurs on the 3'-side of the TT dinucleotide at the point of strand exchange. HJ branch migration catalyzed by RuvA-RuvB allows RuvC to scan DNA until it finds its consensus sequence, where it cleaves and resolves the cruciform DNA. This Xanthomonas axonopodis pv. citri (strain 306) protein is Crossover junction endodeoxyribonuclease RuvC.